The chain runs to 196 residues: MTIPFILASASPARRKLLQTMGIDPIVRHSNFDESQIQLTDTIALVQTLAQCKAEVVANEVNEGLILGCDSLLEVDTQSYGKPESPEEAIIRWQKMRGNSGVLYTGHALIDKTQNKQLLRCGITQVYFADVSDAEIKAYVASGEPLKCAGCFALEGKGGLFVEKLEGCHSNVIGLSLPLLREMLNELGYTVMDFWQ.

The Proton acceptor role is filled by Asp-70.

It belongs to the Maf family. A divalent metal cation is required as a cofactor.

Its subcellular location is the cytoplasm. It catalyses the reaction a ribonucleoside 5'-triphosphate + H2O = a ribonucleoside 5'-phosphate + diphosphate + H(+). The enzyme catalyses a 2'-deoxyribonucleoside 5'-triphosphate + H2O = a 2'-deoxyribonucleoside 5'-phosphate + diphosphate + H(+). Nucleoside triphosphate pyrophosphatase. May have a dual role in cell division arrest and in preventing the incorporation of modified nucleotides into cellular nucleic acids. This chain is Nucleoside triphosphate pyrophosphatase, found in Gloeothece citriformis (strain PCC 7424) (Cyanothece sp. (strain PCC 7424)).